We begin with the raw amino-acid sequence, 121 residues long: Small ribosomal subunit protein uS13 (121 aa).

Residues 93–121 (RGLPMRGQRTRTNARTRKGPRKAAQSLKK) form a disordered region.

It belongs to the universal ribosomal protein uS13 family. As to quaternary structure, part of the 30S ribosomal subunit. Forms a loose heterodimer with protein S19. Forms two bridges to the 50S subunit in the 70S ribosome.

In terms of biological role, located at the top of the head of the 30S subunit, it contacts several helices of the 16S rRNA. In the 70S ribosome it contacts the 23S rRNA (bridge B1a) and protein L5 of the 50S subunit (bridge B1b), connecting the 2 subunits; these bridges are implicated in subunit movement. Contacts the tRNAs in the A and P-sites. The polypeptide is Small ribosomal subunit protein uS13 (Variovorax paradoxus (strain S110)).